The primary structure comprises 472 residues: Putative diacyglycerol O-acyltransferase MT3172 (472 aa).

His139 functions as the Proton acceptor in the catalytic mechanism. Residues 217–238 are disordered; sequence DRRVPPTFDRSAPPGPFQRGLS.

Belongs to the long-chain O-acyltransferase family.

It carries out the reaction an acyl-CoA + a 1,2-diacyl-sn-glycerol = a triacyl-sn-glycerol + CoA. It functions in the pathway glycerolipid metabolism; triacylglycerol biosynthesis. The sequence is that of Putative diacyglycerol O-acyltransferase MT3172 from Mycobacterium tuberculosis (strain CDC 1551 / Oshkosh).